A 666-amino-acid polypeptide reads, in one-letter code: Protein scarlet (666 aa).

The Cytoplasmic segment spans residues 1–417; that stretch reads MSDSDSKRID…TIQWLRFIQK (417 aa). Residues 26–55 form a disordered region; that stretch reads PVGSTIEVPSLDSTPKLSKRNSSERSLPLR. The ABC transporter domain maps to 69 to 316; sequence LVWRDLCVYT…FANHGYYCPE (248 aa). Residue 108-115 coordinates ATP; sequence GSSGSGKT. The chain crosses the membrane as a helical span at residues 418–438; that stretch reads IAMAFIIGACFAGTTEPSQLG. Residues 439–444 are Extracellular-facing; sequence VQAVQG. Residues 445 to 465 traverse the membrane as a helical segment; sequence ALFIMISENTYHPMYSVLNLF. Residues 466–490 lie on the Cytoplasmic side of the membrane; sequence PQGFPLFMRETRSGLYSTGQYYAAN. The helical transmembrane segment at 491 to 511 threads the bilayer; it reads ILALLPGMIIEPLIFVIICYW. The Extracellular segment spans residues 512-518; sequence LTGLRST. The chain crosses the membrane as a helical span at residues 519–539; sequence FYAFGVTAMCVVLVMNVATAC. At 540 to 551 the chain is on the cytoplasmic side; sequence GCFFSTAFNSVP. A helical membrane pass occupies residues 552-572; sequence LAMAYLVPLDYIFMITSGIFI. Residues 573–639 are Extracellular-facing; that stretch reads QVNSLPVAFW…YSFNESNVYR (67 aa). 2 N-linked (GlcNAc...) asparagine glycosylation sites follow: N607 and N633. The helical transmembrane segment at 640–660 threads the bilayer; that stretch reads NLLAMVGLYFGFHLLGYYCLW. The Cytoplasmic segment spans residues 661–666; that stretch reads RRARKL.

This sequence belongs to the ABC transporter superfamily. ABCG family. Eye pigment precursor importer (TC 3.A.1.204) subfamily. In terms of assembly, may form a heterodimer with w/white. Expressed in the eye, specifically in primary pigment cells, secondary pigment cells and retinula cells (at protein level).

It is found in the cytoplasmic vesicle membrane. The catalysed reaction is L-kynurenine(out) + ATP + H2O = L-kynurenine(in) + ADP + phosphate + H(+). Functionally, ATP-dependent transporter of the ATP-binding cassette (ABC) family which transports various molecules including bioamines, neurotransmitters and metabolic intermediates. In the eye and probably in association with w/white, required for the transport of the eye brown pigment precursors, kynurenine and probably tryptophan, into pigment cell granules. In Malpighian tubules and pupal eyes, involved in kynurenine transport. Probably in association with w/white, plays a role in zinc storage granule biogenesis in Malpighian tubule principal epithelial cells. This Drosophila melanogaster (Fruit fly) protein is Protein scarlet.